Here is a 340-residue protein sequence, read N- to C-terminus: COP9 signalosome complex subunit 5 (340 aa).

Residues 52–189 (VRISATALIK…IGAFRTYPAD (138 aa)) form the MPN domain. Positions 135, 137, and 148 each coordinate Zn(2+). Residues 135–148 (HSHPGYGCWLSGID) carry the JAMM motif motif.

It belongs to the peptidase M67A family. CSN5 subfamily. As to quaternary structure, component of the COP9 signalosome (CSN) complex.

The protein resides in the cytoplasm. It is found in the nucleus. In terms of biological role, catalytic Component of the COP9 signalosome (CSN) complex that acts as an regulator of the ubiquitin (Ubl) conjugation pathway by mediating the deneddylation of the cullin subunit of SCF-type E3 ubiquitin-protein ligase complexes. The polypeptide is COP9 signalosome complex subunit 5 (RRI1) (Gibberella zeae (strain ATCC MYA-4620 / CBS 123657 / FGSC 9075 / NRRL 31084 / PH-1) (Wheat head blight fungus)).